The following is a 202-amino-acid chain: Dephospho-CoA kinase (202 aa).

A DPCK domain is found at 3-200; it reads TIGLTGGIGS…QRYLTLAANR (198 aa). 11–16 contacts ATP; that stretch reads GSGKSA.

This sequence belongs to the CoaE family.

Its subcellular location is the cytoplasm. The catalysed reaction is 3'-dephospho-CoA + ATP = ADP + CoA + H(+). It functions in the pathway cofactor biosynthesis; coenzyme A biosynthesis; CoA from (R)-pantothenate: step 5/5. Its function is as follows. Catalyzes the phosphorylation of the 3'-hydroxyl group of dephosphocoenzyme A to form coenzyme A. The polypeptide is Dephospho-CoA kinase (Thiobacillus denitrificans (strain ATCC 25259 / T1)).